A 394-amino-acid chain; its full sequence is Phosphopentomutase (394 aa).

6 residues coordinate Mn(2+): aspartate 14, aspartate 287, histidine 292, aspartate 328, histidine 329, and histidine 340.

This sequence belongs to the phosphopentomutase family. Mn(2+) serves as cofactor.

The protein resides in the cytoplasm. It carries out the reaction 2-deoxy-alpha-D-ribose 1-phosphate = 2-deoxy-D-ribose 5-phosphate. The enzyme catalyses alpha-D-ribose 1-phosphate = D-ribose 5-phosphate. It participates in carbohydrate degradation; 2-deoxy-D-ribose 1-phosphate degradation; D-glyceraldehyde 3-phosphate and acetaldehyde from 2-deoxy-alpha-D-ribose 1-phosphate: step 1/2. Its function is as follows. Isomerase that catalyzes the conversion of deoxy-ribose 1-phosphate (dRib-1-P) and ribose 1-phosphate (Rib-1-P) to deoxy-ribose 5-phosphate (dRib-5-P) and ribose 5-phosphate (Rib-5-P), respectively. The sequence is that of Phosphopentomutase from Shouchella clausii (strain KSM-K16) (Alkalihalobacillus clausii).